The following is a 201-amino-acid chain: Small ribosomal subunit protein uS4c (201 aa).

The disordered stretch occupies residues 13-43; sequence RRLGDLPGLSRKAIKRPYPPGEHGQKPRKPS. The region spanning 90–154 is the S4 RNA-binding domain; sequence MRLDNTIFRL…SKQLVESYLA (65 aa).

This sequence belongs to the universal ribosomal protein uS4 family. In terms of assembly, part of the 30S ribosomal subunit. Contacts protein S5. The interaction surface between S4 and S5 is involved in control of translational fidelity.

The protein resides in the plastid. It is found in the chloroplast. One of the primary rRNA binding proteins, it binds directly to 16S rRNA where it nucleates assembly of the body of the 30S subunit. In terms of biological role, with S5 and S12 plays an important role in translational accuracy. This chain is Small ribosomal subunit protein uS4c (rps4), found in Porphyra purpurea (Red seaweed).